A 760-amino-acid polypeptide reads, in one-letter code: H(+)/Cl(-) exchange transporter 4 (760 aa).

Residues 1–67 (MVNAGAMSGS…WEFIKSLLDA (67 aa)) lie on the Cytoplasmic side of the membrane. The segment at 14–63 (MDFLDEPFPDVGTYEDFHTIDWLREKSRDTDRHRKITSKSKESIWEFIKS) is required for localization in the endoplasmic reticulum. Helical transmembrane passes span 68 to 105 (WSGWVVMLLIGLLAGTLAGVIDLAVDWMTDLKEGVCLS) and 151 to 174 (LNYLMYILWALLFAFLAVSLVRVF). The Selectivity filter part_1 signature appears at 180–184 (GSGIP). Serine 181 is a binding site for chloride. An intramembrane region (helical) is located at residues 183-190 (IPEIKTIL). Helical transmembrane passes span 200–218 (GKWTLLIKTVTLVLVVSSG) and 224–243 (EGPLVHVACCCGNFFSSLFS). The Selectivity filter part_2 signature appears at 222 to 226 (GKEGP). 2 intramembrane regions (helical) span residues 255 to 267 (VLSAAAAAGVSVA) and 271 to 279 (PIGGVLFSL). The next 5 membrane-spanning stretches (helical) occupy residues 291–309 (LWRSFFAALVAAFTLRSIN), 333–358 (FPFILLGVFGGLWGTLFIRCNIAWCR), 365–385 (LGKYPVLEVIVVTAITAIIAY), 442–462 (MWQLALALIFKIVVTIFTFGM), and 467–486 (GLFIPSMAVGAIAGRMVGIG). Positions 467–471 (GLFIP) match the Selectivity filter part_3 motif. Residue phenylalanine 469 participates in chloride binding. Intramembrane regions (helical) lie at residues 514–528 (GLYAMVGAAACLGGV) and 532–543 (TVSLVVIMFELT). The segment at residues 544-547 (GGLE) is an intramembrane region (note=Loop between two helices). A helical membrane pass occupies residues 548–566 (YIVPLMAAAVTSKWVADAF). Residues 567-760 (GKEGIYEAHI…NQDPESIMFN (194 aa)) lie on the Cytoplasmic side of the membrane. Tyrosine 572 lines the chloride pocket. A CBS 1 domain is found at 600–666 (MRPRRGEPPL…AIKNARQRQE (67 aa)). ATP-binding positions include serine 610 and 631–633 (YNG). A required for localization in the endoplasmic reticulum region spans residues 667-696 (GIVSNSIMYFTEEPPELPANSPHPLKLRRI). The region spanning 697 to 755 (LNLSPFTVTDHTPMETVVDIFRKLGLRQCLVTRSGRLLGIITKKDVLRHMAQMANQDPE) is the CBS 2 domain. Residue 738–741 (TKKD) coordinates ATP.

The protein belongs to the chloride channel (TC 2.A.49) family. ClC-4/CLCN4 subfamily. In terms of assembly, monomer. Forms heterodimers with CLCN3. Abundant in skeletal muscle and also detectable in brain and heart.

The protein localises to the early endosome membrane. It localises to the late endosome membrane. Its subcellular location is the endoplasmic reticulum membrane. The protein resides in the lysosome membrane. It is found in the recycling endosome membrane. Its function is as follows. Strongly outwardly rectifying, electrogenic H(+)/Cl(-)exchanger which mediates the exchange of chloride ions against protons. The CLC channel family contains both chloride channels and proton-coupled anion transporters that exchange chloride or another anion for protons. The presence of conserved gating glutamate residues is typical for family members that function as antiporters. The polypeptide is H(+)/Cl(-) exchange transporter 4 (CLCN4) (Homo sapiens (Human)).